We begin with the raw amino-acid sequence, 189 residues long: Elongation factor P (189 aa).

Position 34 is an N6-(3,6-diaminohexanoyl)-5-hydroxylysine (K34).

This sequence belongs to the elongation factor P family. May be beta-lysylated on the epsilon-amino group of Lys-34 by the combined action of EpmA and EpmB, and then hydroxylated on the C5 position of the same residue by EpmC (if this protein is present). Lysylation is critical for the stimulatory effect of EF-P on peptide-bond formation. The lysylation moiety may extend toward the peptidyltransferase center and stabilize the terminal 3-CCA end of the tRNA. Hydroxylation of the C5 position on Lys-34 may allow additional potential stabilizing hydrogen-bond interactions with the P-tRNA.

It localises to the cytoplasm. The protein operates within protein biosynthesis; polypeptide chain elongation. In terms of biological role, involved in peptide bond synthesis. Alleviates ribosome stalling that occurs when 3 or more consecutive Pro residues or the sequence PPG is present in a protein, possibly by augmenting the peptidyl transferase activity of the ribosome. Modification of Lys-34 is required for alleviation. This Halorhodospira halophila (strain DSM 244 / SL1) (Ectothiorhodospira halophila (strain DSM 244 / SL1)) protein is Elongation factor P.